The primary structure comprises 512 residues: Methionine--tRNA ligase (512 aa).

The 'HIGH' region signature appears at 12–22 (YYVNDVPHIGH). The short motif at 295 to 299 (KISKS) is the 'KMSKS' region element. Lys298 contacts ATP.

This sequence belongs to the class-I aminoacyl-tRNA synthetase family. MetG type 2B subfamily. As to quaternary structure, monomer.

It is found in the cytoplasm. It carries out the reaction tRNA(Met) + L-methionine + ATP = L-methionyl-tRNA(Met) + AMP + diphosphate. Its function is as follows. Is required not only for elongation of protein synthesis but also for the initiation of all mRNA translation through initiator tRNA(fMet) aminoacylation. The chain is Methionine--tRNA ligase from Rickettsia felis (strain ATCC VR-1525 / URRWXCal2) (Rickettsia azadi).